The primary structure comprises 344 residues: Aspartate-semialdehyde dehydrogenase (344 aa).

Residues 10 to 13 (TGQV) and 38 to 39 (RS) contribute to the NADP(+) site. Position 101 (R101) interacts with phosphate. The active-site Acyl-thioester intermediate is the C131. Position 158 (Q158) interacts with substrate. 161–162 (SG) provides a ligand contact to NADP(+). K228 is a phosphate binding site. Residue R250 coordinates substrate. H257 (proton acceptor) is an active-site residue. N326 provides a ligand contact to NADP(+).

The protein belongs to the aspartate-semialdehyde dehydrogenase family. In terms of assembly, homodimer.

The enzyme catalyses L-aspartate 4-semialdehyde + phosphate + NADP(+) = 4-phospho-L-aspartate + NADPH + H(+). The protein operates within amino-acid biosynthesis; L-lysine biosynthesis via DAP pathway; (S)-tetrahydrodipicolinate from L-aspartate: step 2/4. It functions in the pathway amino-acid biosynthesis; L-methionine biosynthesis via de novo pathway; L-homoserine from L-aspartate: step 2/3. It participates in amino-acid biosynthesis; L-threonine biosynthesis; L-threonine from L-aspartate: step 2/5. Its function is as follows. Catalyzes the NADPH-dependent formation of L-aspartate-semialdehyde (L-ASA) by the reductive dephosphorylation of L-aspartyl-4-phosphate. In Corynebacterium glutamicum (strain ATCC 13032 / DSM 20300 / JCM 1318 / BCRC 11384 / CCUG 27702 / LMG 3730 / NBRC 12168 / NCIMB 10025 / NRRL B-2784 / 534), this protein is Aspartate-semialdehyde dehydrogenase.